Here is a 299-residue protein sequence, read N- to C-terminus: Zinc finger protein-like 1 homolog (299 aa).

Residues 1 to 43 (MGLCKCPKRLVTNQFCFEHRVNVCEHCMVQSHPKCIVQSYLQW) form a B box-type; degenerate zinc finger. The RING-type; atypical zinc-finger motif lies at 53 to 101 (CTLCGTTLEQGDCVRLVCYHVFHWDCLNARQAALPANTAPRGHQCPACS). The segment at 200–231 (AGDYASSRRPLLPRQSPIGGTDRDDNKYQRRT) is disordered. Serine 215 is modified (phosphoserine). A helical transmembrane segment spans residues 256–276 (WFLVTAGILAFVLFVYLMAWL).

The protein belongs to the ZFPL1 family.

It is found in the membrane. In Drosophila melanogaster (Fruit fly), this protein is Zinc finger protein-like 1 homolog.